A 1019-amino-acid polypeptide reads, in one-letter code: Collagen alpha-2(VI) chain (1019 aa).

Positions 1-20 (MLQGTCSVLLLWGILGAIQA) are cleaved as a signal peptide. The tract at residues 21 to 256 (QQQEVISPDT…YKVSCLEIPG (236 aa)) is nonhelical region. In terms of domain architecture, VWFA 1 spans 46–234 (HVYFVLDTSE…EIDQDTINRI (189 aa)). Asn140 carries N-linked (GlcNAc...) asparagine glycosylation. A disordered region spans residues 257–588 (PSGPKGYRGQ…GEPGPPGDPG (332 aa)). Residues 257–590 (PSGPKGYRGQ…PGPPGDPGLT (334 aa)) are triple-helical region. Low complexity predominate over residues 287 to 305 (DPGIEGPIGFPGPKGVPGF). Over residues 306-318 (KGEKGEFGADGRK) the composition is skewed to basic and acidic residues. A glycan (N-linked (GlcNAc...) asparagine) is linked at Asn327. 2 stretches are compositionally biased toward basic and acidic residues: residues 365–377 (ERGDQGGKGDPGR) and 419–429 (PKGEPGRRGDP). Short sequence motifs (cell attachment site) lie at residues 366–368 (RGD), 426–428 (RGD), 489–491 (RGD), 498–500 (RGD), and 539–541 (RGD). The span at 524 to 557 (PGEKGEPGPRGPEGGRGDFGLKGEPGRKGEKGEP) shows a compositional bias: basic and acidic residues. A compositionally biased stretch (pro residues) spans 559–569 (DPGPPGEPGPR). Positions 591-1019 (ECDVMTYVRE…FFDRFIRWIC (429 aa)) are nonhelical region. VWFA domains are found at residues 615 to 805 (DVVF…EDVL) and 833 to 1014 (DIVF…FDRF). An N-linked (GlcNAc...) asparagine glycan is attached at Asn630. Thr701 is modified (phosphothreonine). Ser705 bears the Phosphoserine mark. Residues Asn785, Asn897, and Asn954 are each glycosylated (N-linked (GlcNAc...) asparagine).

The protein belongs to the type VI collagen family. As to quaternary structure, trimers composed of three different chains: alpha-1(VI), alpha-2(VI), and alpha-3(VI) or alpha-5(VI) or alpha-6(VI). Interacts with CSPG4. Prolines at the third position of the tripeptide repeating unit (G-X-Y) are hydroxylated in some or all of the chains.

It localises to the secreted. The protein resides in the extracellular space. It is found in the extracellular matrix. The protein localises to the membrane. Functionally, collagen VI acts as a cell-binding protein. The polypeptide is Collagen alpha-2(VI) chain (COL6A2) (Homo sapiens (Human)).